The following is a 309-amino-acid chain: Nucleoside kinase (309 aa).

Positions 16, 42, and 46 each coordinate substrate. ATP is bound at residue Q108. Substrate is bound by residues 110-112 (SYF) and Q166. Residues N189 and 217 to 223 (KTYGKEG) each bind ATP. Residue D249 coordinates substrate. D249 functions as the Proton acceptor in the catalytic mechanism.

This sequence belongs to the carbohydrate kinase PfkB family. As to quaternary structure, homodimer. Mg(2+) is required as a cofactor.

In terms of biological role, catalyzes the phosphorylation of a wide range of nucleosides to yield nucleoside monophosphates, using ATP, ITP or GTP as phosphate donor. The sequence is that of Nucleoside kinase from Methanothermobacter thermautotrophicus (strain ATCC 29096 / DSM 1053 / JCM 10044 / NBRC 100330 / Delta H) (Methanobacterium thermoautotrophicum).